Reading from the N-terminus, the 204-residue chain is MNIDIFLFYLFSIFALISSLMVIGLTNAVHSVLFLILVFCNVAGLLLLLGPEFFSFMLIIVYVGAIAVLFLFVVMMLNIKLKSTNISFSSLWPIGILTFVILLSQFFSSFYELDLVKFQGKELFFISWANENSNLTNIKVIGKVLYTHFNLLFLICGLILLVAMIGVIVLTMHQRVDVKKQQIALQLARTAPNVIKFIILRRKR.

The next 5 helical transmembrane spans lie at 5-25, 29-49, 56-76, 91-111, and 151-171; these read IFLF…VIGL, VHSV…LLLL, FMLI…VVMM, LWPI…SSFY, and LLFL…IVLT.

This sequence belongs to the complex I subunit 6 family.

The protein localises to the mitochondrion membrane. The catalysed reaction is a ubiquinone + NADH + 5 H(+)(in) = a ubiquinol + NAD(+) + 4 H(+)(out). Core subunit of the mitochondrial membrane respiratory chain NADH dehydrogenase (Complex I) that is believed to belong to the minimal assembly required for catalysis. Complex I functions in the transfer of electrons from NADH to the respiratory chain. The immediate electron acceptor for the enzyme is believed to be ubiquinone. The sequence is that of NADH-ubiquinone oxidoreductase chain 6 (ND6) from Chondrus crispus (Carrageen Irish moss).